The primary structure comprises 285 residues: Baculoviral IAP repeat-containing protein 7 (285 aa).

Positions 18 to 47 (ESRARDSVRGPELSHREDGSGRTQEQDKPH) are disordered. The span at 19–47 (SRARDSVRGPELSHREDGSGRTQEQDKPH) shows a compositional bias: basic and acidic residues. Residues 96 to 161 (RLASFYDWPS…RWFPRCQFLL (66 aa)) form a BIR repeat. Zn(2+) is bound by residues Cys-130, Cys-133, His-150, and Cys-157. Residues 184–225 (QREEPEDAVSATPSAPAHGSPELLRSRRETQPEDVSEPGAKD) form a disordered region. The RING-type zinc-finger motif lies at 239–273 (CKVCLDRAVSIVFVPCGHFVCTECAPNLQLCPICR).

The protein belongs to the IAP family. In terms of assembly, binds to caspase-9. Interaction with DIABLO/SMAC via the BIR domain disrupts binding to caspase-9 and apoptotic suppressor activity. Interacts with TAB1. In vitro, interacts with caspase-3 and caspase-7 via its BIR domain. Post-translationally, autoubiquitinated and undergoes proteasome-mediated degradation. In terms of processing, the truncated protein (tLivin) not only loses its anti-apoptotic effect but also acquires a pro-apoptotic effect.

It is found in the nucleus. The protein localises to the cytoplasm. The protein resides in the golgi apparatus. It carries out the reaction S-ubiquitinyl-[E2 ubiquitin-conjugating enzyme]-L-cysteine + [acceptor protein]-L-lysine = [E2 ubiquitin-conjugating enzyme]-L-cysteine + N(6)-ubiquitinyl-[acceptor protein]-L-lysine.. Apoptotic regulator capable of exerting proapoptotic and anti-apoptotic activities and plays crucial roles in apoptosis, cell proliferation, and cell cycle control. Its anti-apoptotic activity is mediated through the inhibition of CASP3, CASP7 and CASP9, as well as by its E3 ubiquitin-protein ligase activity. As it is a weak caspase inhibitor, its anti-apoptotic activity is thought to be due to its ability to ubiquitinate DIABLO/SMAC targeting it for degradation thereby promoting cell survival. May contribute to caspase inhibition, by blocking the ability of DIABLO/SMAC to disrupt XIAP/BIRC4-caspase interactions. Protects against apoptosis induced by TNF or by chemical agents such as adriamycin, etoposide or staurosporine. Suppression of apoptosis is mediated by activation of MAPK8/JNK1, and possibly also of MAPK9/JNK2. This activation depends on TAB1 and MAP3K7/TAK1. In vitro, inhibits CASP3 and proteolytic activation of pro-CASP9. The chain is Baculoviral IAP repeat-containing protein 7 (Birc7) from Mus musculus (Mouse).